The sequence spans 378 residues: Succinyl-diaminopimelate desuccinylase (378 aa).

Residue His66 participates in Zn(2+) binding. Asp68 is an active-site residue. Asp99 contributes to the Zn(2+) binding site. Glu133 (proton acceptor) is an active-site residue. Zn(2+) contacts are provided by Glu134, Glu162, and His348.

This sequence belongs to the peptidase M20A family. DapE subfamily. In terms of assembly, homodimer. Requires Zn(2+) as cofactor. The cofactor is Co(2+).

It catalyses the reaction N-succinyl-(2S,6S)-2,6-diaminopimelate + H2O = (2S,6S)-2,6-diaminopimelate + succinate. The protein operates within amino-acid biosynthesis; L-lysine biosynthesis via DAP pathway; LL-2,6-diaminopimelate from (S)-tetrahydrodipicolinate (succinylase route): step 3/3. In terms of biological role, catalyzes the hydrolysis of N-succinyl-L,L-diaminopimelic acid (SDAP), forming succinate and LL-2,6-diaminopimelate (DAP), an intermediate involved in the bacterial biosynthesis of lysine and meso-diaminopimelic acid, an essential component of bacterial cell walls. The protein is Succinyl-diaminopimelate desuccinylase of Halorhodospira halophila (strain DSM 244 / SL1) (Ectothiorhodospira halophila (strain DSM 244 / SL1)).